Reading from the N-terminus, the 382-residue chain is MDRMCEERAAEDGSDEEDPDATEAPARIRDTPEDIVLEAPASGLAFHPARDLLAAGDVDGDVFVFSYSCQEGETKELWSSGHHLKSCRAVVFSEDGQKLVTVSKDKAIHFLDVELGRLERRISKAHGAPINSLLLVDENVLATGDDTGGIRLWDQRKEGPLMDMRQHEEYIADMALDPDKKLLLTASGDGCLGVFNIKRRRFELLSEPQSGDLTSVTLMKYGRKVACGSSEGTIYLFNWDGFGATSDRFALRAESIDCMVPVTESLLCAGSTDGVIRAVNILPNRVVGSVGQHAEEPVENLALSHCGCFLASSGHDQRLKFWDMAQLRALVVDDYRRRKKKGGPLRALSSKAWSTDDFFAGLREEGEDAKTLEEEESEDDSD.

Residues Met-1–Glu-11 are compositionally biased toward basic and acidic residues. A disordered region spans residues Met-1–Thr-31. Over residues Asp-12–Ala-21 the composition is skewed to acidic residues. Ser-14 is modified (phosphoserine). WD repeat units lie at residues Val-36 to Lys-75, His-82 to Arg-121, Ala-125 to Asp-163, Gln-166 to Leu-205, Pro-208 to Asp-247, Ala-250 to Ser-289, and His-293 to Val-332. Phosphoserine is present on residues Ser-354 and Ser-381.

It belongs to the WD repeat WDR55 family.

The protein resides in the nucleus. The protein localises to the nucleolus. Its subcellular location is the cytoplasm. Nucleolar protein that acts as a modulator of rRNA synthesis. Plays a central role during organogenesis. The chain is WD repeat-containing protein 55 (WDR55) from Bos taurus (Bovine).